Reading from the N-terminus, the 438-residue chain is ATP-dependent RNA helicase RhlB (438 aa).

The short motif at 9–37 is the Q motif element; that stretch reads QRFADLPLHPEVKQALAENGFEFCTPIQA. Residues 40-219 form the Helicase ATP-binding domain; sequence LPVLLQSKDI…YDHMNEPVKV (180 aa). An ATP-binding site is contributed by 53–60; the sequence is AQTGTGKT. The short motif at 165–168 is the DEAD box element; sequence DEAD. One can recognise a Helicase C-terminal domain in the interval 243–390; sequence KMRLLLTLIE…VSNYDSEALL (148 aa). The disordered stretch occupies residues 395–438; sequence TPAKIHRKHPSGTRNLRDRSGASRPGAQRSGARPPRHDRTRRHS. Positions 428-438 are enriched in basic residues; that stretch reads PPRHDRTRRHS.

It belongs to the DEAD box helicase family. RhlB subfamily. As to quaternary structure, component of the RNA degradosome, which is a multiprotein complex involved in RNA processing and mRNA degradation.

The protein localises to the cytoplasm. It carries out the reaction ATP + H2O = ADP + phosphate + H(+). In terms of biological role, DEAD-box RNA helicase involved in RNA degradation. Has RNA-dependent ATPase activity and unwinds double-stranded RNA. The sequence is that of ATP-dependent RNA helicase RhlB from Shewanella baltica (strain OS185).